A 172-amino-acid polypeptide reads, in one-letter code: L-2,4-diaminobutyric acid acetyltransferase (172 aa).

The region spanning 15 to 166 (IVFDKPTVED…DEHEEELTFR (152 aa)) is the N-acetyltransferase domain.

It belongs to the acetyltransferase family. EctA subfamily.

It catalyses the reaction L-2,4-diaminobutanoate + acetyl-CoA = (2S)-4-acetamido-2-aminobutanoate + CoA + H(+). It participates in amine and polyamine biosynthesis; ectoine biosynthesis; L-ectoine from L-aspartate 4-semialdehyde: step 2/3. In terms of biological role, catalyzes the acetylation of L-2,4-diaminobutyrate (DABA) to gamma-N-acetyl-alpha,gamma-diaminobutyric acid (ADABA) with acetyl coenzyme A. This chain is L-2,4-diaminobutyric acid acetyltransferase (ectA), found in Marinococcus halophilus.